Here is a 373-residue protein sequence, read N- to C-terminus: UDP-3-O-acylglucosamine N-acyltransferase 2 (373 aa).

Residue His239 is the Proton acceptor of the active site. The segment at 345–373 (KTNGKSGQADAPPKVALECHGTTGDAPQG) is disordered.

It belongs to the transferase hexapeptide repeat family. LpxD subfamily. Homotrimer.

It catalyses the reaction a UDP-3-O-[(3R)-3-hydroxyacyl]-alpha-D-glucosamine + a (3R)-hydroxyacyl-[ACP] = a UDP-2-N,3-O-bis[(3R)-3-hydroxyacyl]-alpha-D-glucosamine + holo-[ACP] + H(+). The protein operates within bacterial outer membrane biogenesis; LPS lipid A biosynthesis. Its function is as follows. Catalyzes the N-acylation of UDP-3-O-acylglucosamine using 3-hydroxyacyl-ACP as the acyl donor. Is involved in the biosynthesis of lipid A, a phosphorylated glycolipid that anchors the lipopolysaccharide to the outer membrane of the cell. In Gloeobacter violaceus (strain ATCC 29082 / PCC 7421), this protein is UDP-3-O-acylglucosamine N-acyltransferase 2.